Consider the following 333-residue polypeptide: NADH-quinone oxidoreductase subunit H (333 aa).

8 helical membrane passes run 15–35 (FFIFFGLAVLLLFAVLGFVTY), 88–108 (FILAPVIAFAPAFMVLAVIPF), 117–137 (IGVGLLYYIAVSGITTIGVVT), 159–179 (ISYEIPLVMSVIGIVLLAGSL), 191–211 (VWYIFVQPIGFVVFLIAAVAE), 239–259 (WAFFMLSEYVYFFGMASLITV), 274–296 (IPGAVWFALKFSSVVFLLIWFRV), and 313–333 (VLLPIALANIFLTALIKELFF).

It belongs to the complex I subunit 1 family. NDH-1 is composed of 14 different subunits. Subunits NuoA, H, J, K, L, M, N constitute the membrane sector of the complex.

The protein localises to the cell membrane. The catalysed reaction is a quinone + NADH + 5 H(+)(in) = a quinol + NAD(+) + 4 H(+)(out). In terms of biological role, NDH-1 shuttles electrons from NADH, via FMN and iron-sulfur (Fe-S) centers, to quinones in the respiratory chain. The immediate electron acceptor for the enzyme in this species is believed to be ubiquinone. Couples the redox reaction to proton translocation (for every two electrons transferred, four hydrogen ions are translocated across the cytoplasmic membrane), and thus conserves the redox energy in a proton gradient. This subunit may bind ubiquinone. The polypeptide is NADH-quinone oxidoreductase subunit H (Bacillus anthracis (strain A0248)).